The following is a 315-amino-acid chain: Aspartate carbamoyltransferase catalytic subunit (315 aa).

Carbamoyl phosphate-binding residues include Arg64 and Thr65. An L-aspartate-binding site is contributed by Lys92. Positions 114, 142, and 145 each coordinate carbamoyl phosphate. 2 residues coordinate L-aspartate: Arg175 and Arg229. Carbamoyl phosphate-binding residues include Gly270 and Pro271.

This sequence belongs to the aspartate/ornithine carbamoyltransferase superfamily. ATCase family. Heterododecamer (2C3:3R2) of six catalytic PyrB chains organized as two trimers (C3), and six regulatory PyrI chains organized as three dimers (R2).

The catalysed reaction is carbamoyl phosphate + L-aspartate = N-carbamoyl-L-aspartate + phosphate + H(+). It participates in pyrimidine metabolism; UMP biosynthesis via de novo pathway; (S)-dihydroorotate from bicarbonate: step 2/3. Functionally, catalyzes the condensation of carbamoyl phosphate and aspartate to form carbamoyl aspartate and inorganic phosphate, the committed step in the de novo pyrimidine nucleotide biosynthesis pathway. The protein is Aspartate carbamoyltransferase catalytic subunit of Xanthobacter autotrophicus (strain ATCC BAA-1158 / Py2).